The primary structure comprises 180 residues: 3-hexulose-6-phosphate isomerase (180 aa).

In terms of domain architecture, SIS spans 33–167; sequence LIDRIIKAKK…IAEIMKRLNL (135 aa). Substrate is bound by residues S51 and 90–95; that span reads SGSGRT. Catalysis depends on E147, which acts as the Proton acceptor.

This sequence belongs to the SIS family. PHI subfamily. As to quaternary structure, homotetramer.

It catalyses the reaction D-arabino-hex-3-ulose 6-phosphate = beta-D-fructose 6-phosphate. Its pathway is carbohydrate biosynthesis; D-ribose 5-phosphate biosynthesis. Functionally, catalyzes the isomerization between 3-hexulose 6-phosphate and fructose 6-phosphate. The protein is 3-hexulose-6-phosphate isomerase (phi) of Methanocaldococcus jannaschii (strain ATCC 43067 / DSM 2661 / JAL-1 / JCM 10045 / NBRC 100440) (Methanococcus jannaschii).